The chain runs to 107 residues: SH3 domain-binding glutamic acid-rich-like protein 2 (107 aa).

The SH3-binding signature appears at 61–67 (QGNPLPP).

This sequence belongs to the SH3BGR family. Highly expressed in brain, placenta, liver and kidney. Expressed in retina.

The protein resides in the nucleus. The sequence is that of SH3 domain-binding glutamic acid-rich-like protein 2 (SH3BGRL2) from Homo sapiens (Human).